A 270-amino-acid polypeptide reads, in one-letter code: Hydroxyethylthiazole kinase (270 aa).

Met-47 is a substrate binding site. Residues Arg-123 and Thr-169 each contribute to the ATP site. Gly-196 provides a ligand contact to substrate.

This sequence belongs to the Thz kinase family. Mg(2+) serves as cofactor.

The enzyme catalyses 5-(2-hydroxyethyl)-4-methylthiazole + ATP = 4-methyl-5-(2-phosphooxyethyl)-thiazole + ADP + H(+). Its pathway is cofactor biosynthesis; thiamine diphosphate biosynthesis; 4-methyl-5-(2-phosphoethyl)-thiazole from 5-(2-hydroxyethyl)-4-methylthiazole: step 1/1. Catalyzes the phosphorylation of the hydroxyl group of 4-methyl-5-beta-hydroxyethylthiazole (THZ). The sequence is that of Hydroxyethylthiazole kinase from Roseiflexus sp. (strain RS-1).